Consider the following 806-residue polypeptide: DNA topoisomerase 1 (806 aa).

The segment covering 1 to 15 has biased composition (low complexity); it reads MSVVSNHHSNGNGNS. The interval 1–236 is disordered; the sequence is MSVVSNHHSN…KKEPPKKKVK (236 aa). A compositionally biased stretch (basic and acidic residues) spans 24 to 34; it reads DEIKKEVKDEP. Composition is skewed to basic residues over residues 49-60 and 98-108; these read RDKKEKKQKKRK and EKKKSKKNNKK. A compositionally biased stretch (acidic residues) spans 113-127; that stretch reads SSEDDDEESEGDVSE. The segment covering 128–137 has biased composition (basic and acidic residues); the sequence is EDVKPQIHSD. Residues 138–153 are compositionally biased toward acidic residues; the sequence is DELEEEDEAPTTDDEE. The span at 159–176 shows a compositional bias: basic residues; sequence EKERRKKEKREKKERKEK. Residues 177 to 188 show a composition bias toward basic and acidic residues; that stretch reads KRLEKENRKIKE. A compositionally biased stretch (acidic residues) spans 189–199; the sequence is EDDEDSDDEDD. A compositionally biased stretch (basic and acidic residues) spans 210–229; that stretch reads KGAEKSKPSTSKKDAGGKKE. Interaction with DNA regions lie at residues 467–468, 530–535, and 634–636; these read KY, RAGNEK, and TVK. The Topo IB-type catalytic domain maps to 474-803; it reads SSKIKGEKDF…IDMTNSSDEE (330 aa). Tyr-761 functions as the O-(3'-phospho-DNA)-tyrosine intermediate in the catalytic mechanism.

This sequence belongs to the type IB topoisomerase family. Expressed in male germ cells and in mature sperm.

The protein resides in the nucleus. The protein localises to the nucleolus. It localises to the chromosome. It carries out the reaction ATP-independent breakage of single-stranded DNA, followed by passage and rejoining.. Its function is as follows. Releases the supercoiling and torsional tension of DNA introduced during the DNA replication and transcription by transiently cleaving and rejoining one strand of the DNA duplex. Introduces a single-strand break via transesterification at a target site in duplex DNA. The scissile phosphodiester is attacked by the catalytic tyrosine of the enzyme, resulting in the formation of a DNA-(3'-phosphotyrosyl)-enzyme intermediate and the expulsion of a 5'-OH DNA strand. The free DNA strand then rotates around the intact phosphodiester bond on the opposing strand, thus removing DNA supercoils. Finally, in the religation step, the DNA 5'-OH attacks the covalent intermediate to expel the active-site tyrosine and restore the DNA phosphodiester backbone. Required for normal spermatogenesis and oogenesis. The polypeptide is DNA topoisomerase 1 (top-1) (Caenorhabditis elegans).